The following is an 85-amino-acid chain: Protein RnfH (85 aa).

The protein belongs to the UPF0125 (RnfH) family.

This chain is Protein RnfH, found in Cereibacter sphaeroides (strain ATCC 17023 / DSM 158 / JCM 6121 / CCUG 31486 / LMG 2827 / NBRC 12203 / NCIMB 8253 / ATH 2.4.1.) (Rhodobacter sphaeroides).